The chain runs to 116 residues: uncharacterized protein (116 aa).

Residues 52–72 (VFCSANSVPLYLLLLTSALHF) traverse the membrane as a helical segment.

The protein localises to the mitochondrion membrane. This is an uncharacterized protein from Arabidopsis thaliana (Mouse-ear cress).